Reading from the N-terminus, the 330-residue chain is Geranylgeranyl diphosphate synthase (330 aa).

Residues Lys-43, Arg-46, and His-75 each coordinate isopentenyl diphosphate. Residues Asp-82 and Asp-86 each contribute to the Mg(2+) site. An an all-trans-polyprenyl diphosphate-binding site is contributed by Arg-91. Residue Arg-92 coordinates isopentenyl diphosphate. Lys-175, Thr-176, Gln-213, Lys-230, and Lys-240 together coordinate an all-trans-polyprenyl diphosphate.

The protein belongs to the FPP/GGPP synthase family. Mg(2+) serves as cofactor.

It carries out the reaction isopentenyl diphosphate + (2E,6E)-farnesyl diphosphate = (2E,6E,10E)-geranylgeranyl diphosphate + diphosphate. It functions in the pathway isoprenoid biosynthesis; geranylgeranyl diphosphate biosynthesis; geranylgeranyl diphosphate from farnesyl diphosphate and isopentenyl diphosphate: step 1/1. Functionally, catalyzes the condensation of isopentenyl pyrophosphate with the allylic pyrophosphates to yield geranylgeranyl diphosphate (GGPP) which is a precursor of the ether-linked lipids. It is able to use dimethylallyl diphosphate (DMAPP), geranyl diphosphate (GPP), and (all-E)-geranyl diphosphate (E-FPP) as an allylic substrate. This chain is Geranylgeranyl diphosphate synthase (gds), found in Sulfolobus acidocaldarius (strain ATCC 33909 / DSM 639 / JCM 8929 / NBRC 15157 / NCIMB 11770).